We begin with the raw amino-acid sequence, 173 residues long: Regulatory protein RecX (173 aa).

The protein belongs to the RecX family.

Its subcellular location is the cytoplasm. Its function is as follows. Modulates RecA activity. The chain is Regulatory protein RecX from Mycobacterium avium (strain 104).